Reading from the N-terminus, the 189-residue chain is Glucose-6-phosphate isomerase (189 aa).

Positions 88, 90, 97, and 136 each coordinate Fe cation.

The protein belongs to the archaeal-type GPI family. As to quaternary structure, homodimer.

It is found in the cytoplasm. It catalyses the reaction alpha-D-glucose 6-phosphate = beta-D-fructose 6-phosphate. It functions in the pathway carbohydrate degradation; glycolysis; D-glyceraldehyde 3-phosphate and glycerone phosphate from D-glucose: step 2/4. This is Glucose-6-phosphate isomerase from Thermococcus gammatolerans (strain DSM 15229 / JCM 11827 / EJ3).